We begin with the raw amino-acid sequence, 150 residues long: SsrA-binding protein (150 aa).

This sequence belongs to the SmpB family.

Its subcellular location is the cytoplasm. In terms of biological role, required for rescue of stalled ribosomes mediated by trans-translation. Binds to transfer-messenger RNA (tmRNA), required for stable association of tmRNA with ribosomes. tmRNA and SmpB together mimic tRNA shape, replacing the anticodon stem-loop with SmpB. tmRNA is encoded by the ssrA gene; the 2 termini fold to resemble tRNA(Ala) and it encodes a 'tag peptide', a short internal open reading frame. During trans-translation Ala-aminoacylated tmRNA acts like a tRNA, entering the A-site of stalled ribosomes, displacing the stalled mRNA. The ribosome then switches to translate the ORF on the tmRNA; the nascent peptide is terminated with the 'tag peptide' encoded by the tmRNA and targeted for degradation. The ribosome is freed to recommence translation, which seems to be the essential function of trans-translation. The sequence is that of SsrA-binding protein from Campylobacter curvus (strain 525.92).